We begin with the raw amino-acid sequence, 584 residues long: Alpha-glucosidase MAL32 (584 aa).

Aspartate 214 acts as the Nucleophile in catalysis. Glutamate 276 (proton donor) is an active-site residue.

This sequence belongs to the glycosyl hydrolase 13 family.

The enzyme catalyses Hydrolysis of terminal, non-reducing (1-&gt;4)-linked alpha-D-glucose residues with release of alpha-D-glucose.. The chain is Alpha-glucosidase MAL32 (MAL32) from Saccharomyces cerevisiae (strain ATCC 204508 / S288c) (Baker's yeast).